A 151-amino-acid chain; its full sequence is UPF0178 protein YaiI (151 aa).

The protein belongs to the UPF0178 family.

This is UPF0178 protein YaiI from Salmonella enteritidis PT4 (strain P125109).